A 121-amino-acid chain; its full sequence is NAD(P)H-quinone oxidoreductase subunit M (121 aa).

Belongs to the complex I NdhM subunit family. As to quaternary structure, NDH-1 can be composed of about 15 different subunits; different subcomplexes with different compositions have been identified which probably have different functions.

The protein resides in the cellular thylakoid membrane. It catalyses the reaction a plastoquinone + NADH + (n+1) H(+)(in) = a plastoquinol + NAD(+) + n H(+)(out). The enzyme catalyses a plastoquinone + NADPH + (n+1) H(+)(in) = a plastoquinol + NADP(+) + n H(+)(out). Its function is as follows. NDH-1 shuttles electrons from an unknown electron donor, via FMN and iron-sulfur (Fe-S) centers, to quinones in the respiratory and/or the photosynthetic chain. The immediate electron acceptor for the enzyme in this species is believed to be plastoquinone. Couples the redox reaction to proton translocation, and thus conserves the redox energy in a proton gradient. Cyanobacterial NDH-1 also plays a role in inorganic carbon-concentration. This chain is NAD(P)H-quinone oxidoreductase subunit M, found in Synechococcus sp. (strain JA-3-3Ab) (Cyanobacteria bacterium Yellowstone A-Prime).